Consider the following 287-residue polypeptide: Large ribosomal subunit protein uL2 (287 aa).

A disordered region spans residues 221-287 (RGSVMNPCDH…SKRSRGGRDS (67 aa)). Basic residues predominate over residues 258-287 (KTRKKNKPSNKLVVRRRRRISKRSRGGRDS).

This sequence belongs to the universal ribosomal protein uL2 family. Part of the 50S ribosomal subunit. Forms a bridge to the 30S subunit in the 70S ribosome.

Functionally, one of the primary rRNA binding proteins. Required for association of the 30S and 50S subunits to form the 70S ribosome, for tRNA binding and peptide bond formation. It has been suggested to have peptidyltransferase activity; this is somewhat controversial. Makes several contacts with the 16S rRNA in the 70S ribosome. This Prochlorococcus marinus (strain MIT 9215) protein is Large ribosomal subunit protein uL2.